A 781-amino-acid polypeptide reads, in one-letter code: Acyl-CoA dehydrogenase family member 11 (781 aa).

Lys177 is subject to N6-acetyllysine. Tyr325 is modified (phosphotyrosine). N6-succinyllysine is present on Lys392. Residues 505–515 (FCMTEPDVASS), 513–515 (ASS), 539–541 (WSS), and Ser541 each bind FAD. Residue Ser515 participates in substrate binding. Substrate is bound at residue 630–633 (GPGR). Residues Arg658, Gln728, and 728 to 732 (QVCGG) each bind FAD. Gly756 provides a ligand contact to substrate. FAD contacts are provided by residues 757-759 (PDE) and Glu759.

It belongs to the acyl-CoA dehydrogenase family. Homodimer. FAD serves as cofactor.

It is found in the peroxisome. The protein localises to the mitochondrion membrane. It catalyses the reaction a 2,3-saturated acyl-CoA + oxidized [electron-transfer flavoprotein] + H(+) = a (2E)-enoyl-CoA + reduced [electron-transfer flavoprotein]. The enzyme catalyses docosanoyl-CoA + oxidized [electron-transfer flavoprotein] + H(+) = (2E)-docosenoyl-CoA + reduced [electron-transfer flavoprotein]. It carries out the reaction tetracosanoyl-CoA + oxidized [electron-transfer flavoprotein] + H(+) = (2E)-tetracosenoyl-CoA + reduced [electron-transfer flavoprotein]. The catalysed reaction is eicosanoyl-CoA + oxidized [electron-transfer flavoprotein] + H(+) = (2E)-eicosenoyl-CoA + reduced [electron-transfer flavoprotein]. It catalyses the reaction hexacosanoyl-CoA + oxidized [electron-transfer flavoprotein] + H(+) = (2E)-hexacosenoyl-CoA + reduced [electron-transfer flavoprotein]. The enzyme catalyses tricosanoyl-CoA + oxidized [electron-transfer flavoprotein] + H(+) = (2E)-tricosenoyl-CoA + reduced [electron-transfer flavoprotein]. It functions in the pathway lipid metabolism; fatty acid beta-oxidation. Its function is as follows. Acyl-CoA dehydrogenase, that exhibits maximal activity towards saturated C22-CoA. Probably participates in beta-oxydation and energy production but could also play a role in the metabolism of specific fatty acids to control fatty acids composition of cellular lipids in brain. The polypeptide is Acyl-CoA dehydrogenase family member 11 (ACAD11) (Pongo abelii (Sumatran orangutan)).